Reading from the N-terminus, the 337-residue chain is uncharacterized protein (337 aa).

The next 2 membrane-spanning stretches (helical) occupy residues 241–261 and 273–293; these read FTLL…GAFI and ASLI…IGII.

It belongs to the glycosyltransferase 2 family.

The protein resides in the cell membrane. This is an uncharacterized protein from Bacillus subtilis (strain 168).